The sequence spans 343 residues: Small ribosomal subunit biogenesis GTPase RsgA (343 aa).

A CP-type G domain is found at His-116 to Phe-275. Residues Asn-163 to Asp-166 and Gly-217 to Ser-225 each bind GTP. Positions 299, 304, 306, and 312 each coordinate Zn(2+).

This sequence belongs to the TRAFAC class YlqF/YawG GTPase family. RsgA subfamily. In terms of assembly, monomer. Associates with 30S ribosomal subunit, binds 16S rRNA. It depends on Zn(2+) as a cofactor.

Its subcellular location is the cytoplasm. Functionally, one of several proteins that assist in the late maturation steps of the functional core of the 30S ribosomal subunit. Helps release RbfA from mature subunits. May play a role in the assembly of ribosomal proteins into the subunit. Circularly permuted GTPase that catalyzes slow GTP hydrolysis, GTPase activity is stimulated by the 30S ribosomal subunit. The polypeptide is Small ribosomal subunit biogenesis GTPase RsgA (Pseudomonas putida (strain ATCC 700007 / DSM 6899 / JCM 31910 / BCRC 17059 / LMG 24140 / F1)).